A 118-amino-acid polypeptide reads, in one-letter code: Mu-like prophage FluMu tail tube protein (118 aa).

The tract at residues 12-32 (RLNGKEWPSDNDGTLTPGGKE) is disordered.

It to phage Mu protein M.

The protein is Mu-like prophage FluMu tail tube protein of Haemophilus influenzae (strain ATCC 51907 / DSM 11121 / KW20 / Rd).